We begin with the raw amino-acid sequence, 193 residues long: Orotate phosphoribosyltransferase (193 aa).

114 to 122 (EDVITTGGS) is a 5-phospho-alpha-D-ribose 1-diphosphate binding site. Positions 118 and 146 each coordinate orotate.

Belongs to the purine/pyrimidine phosphoribosyltransferase family. PyrE subfamily. In terms of assembly, homodimer. Requires Mg(2+) as cofactor.

The catalysed reaction is orotidine 5'-phosphate + diphosphate = orotate + 5-phospho-alpha-D-ribose 1-diphosphate. The protein operates within pyrimidine metabolism; UMP biosynthesis via de novo pathway; UMP from orotate: step 1/2. Functionally, catalyzes the transfer of a ribosyl phosphate group from 5-phosphoribose 1-diphosphate to orotate, leading to the formation of orotidine monophosphate (OMP). This is Orotate phosphoribosyltransferase from Chlorobium phaeobacteroides (strain DSM 266 / SMG 266 / 2430).